Consider the following 317-residue polypeptide: Glycine--tRNA ligase alpha subunit (317 aa).

This sequence belongs to the class-II aminoacyl-tRNA synthetase family. In terms of assembly, tetramer of two alpha and two beta subunits.

The protein resides in the cytoplasm. It carries out the reaction tRNA(Gly) + glycine + ATP = glycyl-tRNA(Gly) + AMP + diphosphate. This is Glycine--tRNA ligase alpha subunit from Pseudomonas fluorescens (strain ATCC BAA-477 / NRRL B-23932 / Pf-5).